The sequence spans 165 residues: HTH-type transcriptional regulator MmpR5 (165 aa).

An HTH marR-type domain is found at 1–151; the sequence is MSVNDGVDQM…LLAYMENVVS (151 aa). Positions 53-76 form a DNA-binding region, H-T-H motif; that stretch reads SEELATALAASSGGISTNARMLIQ.

In terms of assembly, homodimer.

Functionally, controls the expression level of the Mmps2-MmpL2, MmpS4-MmpL4, and MmpS5-MmpL5 transport systems. Also controls its own expression. Acts by binding directly to the promoter regions. The chain is HTH-type transcriptional regulator MmpR5 from Mycobacterium tuberculosis (strain ATCC 25618 / H37Rv).